The sequence spans 333 residues: Protein pelota homolog (333 aa).

The protein belongs to the eukaryotic release factor 1 family. Pelota subfamily. As to quaternary structure, monomer. A divalent metal cation is required as a cofactor.

The protein localises to the cytoplasm. May function in recognizing stalled ribosomes, interact with stem-loop structures in stalled mRNA molecules, and effect endonucleolytic cleavage of the mRNA. May play a role in the release non-functional ribosomes and degradation of damaged mRNAs. Has endoribonuclease activity. The chain is Protein pelota homolog from Pyrobaculum arsenaticum (strain DSM 13514 / JCM 11321 / PZ6).